Reading from the N-terminus, the 2804-residue chain is Nipped-B-like protein (2804 aa).

Polar residues-rich tracts occupy residues 128–173 (LSQN…QNSP) and 191–208 (HPSS…SVSS). The tract at residues 128–340 (LSQNSMHSSP…LGKDEKEQSE (213 aa)) is disordered. 2 positions are modified to phosphoserine: S150 and S162. Residues 234-249 (HHADNPRHGSSEDYLH) are compositionally biased toward basic and acidic residues. Phosphoserine is present on residues S243, S256, S274, S280, S284, S301, S306, and S318. The segment covering 331 to 340 (LGKDEKEQSE) has biased composition (basic and acidic residues). S350 is subject to Phosphoserine. A compositionally biased stretch (basic and acidic residues) spans 482 to 500 (RESAIERERFSKEVQDKDK). The segment at 482–946 (RESAIERERF…NKAEFPSYLL (465 aa)) is disordered. Over residues 523-534 (PASQETGSTGNG) the composition is skewed to polar residues. Basic and acidic residues-rich tracts occupy residues 562-572 (DSIKKPEEIKQ), 593-663 (PENH…ECKQ), 672-685 (KQNE…KPND), and 694-939 (ETTK…DNKA). Residues T713 and T746 each carry the phosphothreonine modification. S912 is subject to Phosphoserine. Positions 996–1009 (NKGAKPVVVLQKLS) match the PxVxL motif motif. Disordered regions lie at residues 1017–1047 (IKDR…DQSV) and 1060–1191 (ESTM…LTPE). At K1082 the chain carries N6-acetyllysine. S1089, S1090, and S1096 each carry phosphoserine. The span at 1089–1100 (SSDEDNDSDEAF) shows a compositional bias: acidic residues. Over residues 1109–1139 (KDDDKAWEYEERDRRSSGDHRRSGHSHEGRR) the composition is skewed to basic and acidic residues. Residues S1150, S1152, and S1154 each carry the phosphoserine modification. Y1159 is subject to Phosphotyrosine. S1160 is subject to Phosphoserine. Residues 1171–1182 (KMKKKEKQKKRK) show a composition bias toward basic residues. T1189 carries the post-translational modification Phosphothreonine. S1197 is modified (phosphoserine). The tract at residues 1691 to 1710 (AMKSQKDEESSEGTHHAKEI) is disordered. HEAT repeat units lie at residues 1767–1805 (AQSF…VDPS), 1843–1881 (PQLA…EQPT), 1945–1984 (YDWF…HILK), 2227–2267 (VNLK…LKEM), and 2313–2351 (LIHP…KYAG). Residues 2473 to 2489 (VKDKRKERKSSPSKENE) show a composition bias toward basic and acidic residues. Disordered regions lie at residues 2473 to 2520 (VKDK…DDIN) and 2651 to 2696 (TSLL…DSTE). A phosphoserine mark is found at S2493, S2509, S2511, S2513, S2515, S2652, and S2658. A compositionally biased stretch (acidic residues) spans 2510 to 2519 (DSDSDSEDDI). A Phosphothreonine modification is found at T2667. The residue at position 2672 (S2672) is a Phosphoserine.

It belongs to the SCC2/Nipped-B family. Heterodimerizes with MAU2/SCC4 to form the cohesin loading complex. The NIPBL-MAU2 heterodimer interacts with the cohesin complex composed of SMC1A/B and SMC3 heterodimer, RAD21 and STAG1/SA1. NIPBL directly contacts all members of the complex, RAD21, SMC1A/B, SMC3 and STAG1. Interacts directly (via PxVxL motif) with CBX5. Interacts with ZNF609 (via N-terminus). Interacts with the multiprotein complex Integrator. Interacts (via PxVxL motif) with CBX3. Interacts with BRD4. Widely expressed. Highly expressed in heart, skeletal muscle, fetal and adult liver, fetal and adult kidney. Expressed at intermediates level in thymus, placenta, peripheral leukocyte and small intestine. Weakly or not expressed in brain, colon, spleen and lung.

Its subcellular location is the nucleus. It is found in the chromosome. Functionally, plays an important role in the loading of the cohesin complex on to DNA. Forms a heterodimeric complex (also known as cohesin loading complex) with MAU2/SCC4 which mediates the loading of the cohesin complex onto chromatin. Plays a role in cohesin loading at sites of DNA damage. Its recruitment to double-strand breaks (DSBs) sites occurs in a CBX3-, RNF8- and RNF168-dependent manner whereas its recruitment to UV irradiation-induced DNA damage sites occurs in a ATM-, ATR-, RNF8- and RNF168-dependent manner. Along with ZNF609, promotes cortical neuron migration during brain development by regulating the transcription of crucial genes in this process. Preferentially binds promoters containing paused RNA polymerase II. Up-regulates the expression of SEMA3A, NRP1, PLXND1 and GABBR2 genes, among others. The protein is Nipped-B-like protein (NIPBL) of Homo sapiens (Human).